The sequence spans 381 residues: Phenylalanine dehydrogenase (381 aa).

Position 55 (Arg-55) interacts with NAD(+). Lys-79 is an L-phenylalanine binding site. Lys-91 is an active-site residue. NAD(+) contacts are provided by residues Asp-126, Ser-157, Thr-161, Gly-191–Tyr-197, Asp-214–Ile-215, Ala-254–Met-255, and Ser-275–Asn-277. Asn-277 serves as a coordination point for L-phenylalanine.

The protein belongs to the Glu/Leu/Phe/Val dehydrogenases family.

The catalysed reaction is L-phenylalanine + NAD(+) + H2O = 3-phenylpyruvate + NH4(+) + NADH + H(+). It functions in the pathway amino-acid biosynthesis; L-phenylalanine biosynthesis; L-phenylalanine from phenylpyruvate (PDH route): step 1/1. Functionally, catalyzes the reversible NAD(+)-dependent oxidative deamination of L-phenylalanine to phenylpyruvate. In Lysinibacillus sphaericus (Bacillus sphaericus), this protein is Phenylalanine dehydrogenase.